We begin with the raw amino-acid sequence, 109 residues long: Flagellar hook-basal body complex protein FliE (109 aa).

The tract at residues 1–38 (MQAIHNDKSLLSPFSELNTDNRTKREESGNAFKEQKGG) is disordered. Basic and acidic residues predominate over residues 19 to 38 (TDNRTKREESGNAFKEQKGG).

Belongs to the FliE family.

Its subcellular location is the bacterial flagellum basal body. The chain is Flagellar hook-basal body complex protein FliE from Helicobacter pylori (strain G27).